Here is a 149-residue protein sequence, read N- to C-terminus: Transcriptional repressor NrdR (149 aa).

A zinc finger spans residues 3-34 (CPFCSATDTKVIDSRLVADGHQVRRRRECTLC). Residues 49 to 139 (PRVIKRDDTR…VYRAFEDVSQ (91 aa)) form the ATP-cone domain.

Belongs to the NrdR family. Zn(2+) is required as a cofactor.

Functionally, negatively regulates transcription of bacterial ribonucleotide reductase nrd genes and operons by binding to NrdR-boxes. This Shewanella denitrificans (strain OS217 / ATCC BAA-1090 / DSM 15013) protein is Transcriptional repressor NrdR.